We begin with the raw amino-acid sequence, 62 residues long: MQCCNQQSSQPKTTTTCPGGVSSCYKKTWRDHRGTIIERGCGCPRVKPGIRLICCKTDECNN.

The segment covering 1 to 17 has biased composition (polar residues); sequence MQCCNQQSSQPKTTTTC. The interval 1-20 is disordered; that stretch reads MQCCNQQSSQPKTTTTCPGG. 4 cysteine pairs are disulfide-bonded: cysteine 3-cysteine 24, cysteine 17-cysteine 41, cysteine 43-cysteine 54, and cysteine 55-cysteine 60.

Belongs to the three-finger toxin family. Short-chain subfamily. Type I alpha-neurotoxin sub-subfamily. As to expression, expressed by the venom gland.

The protein resides in the secreted. Its function is as follows. Binds to muscle nicotinic acetylcholine receptor (nAChR) and inhibit acetylcholine from binding to the receptor, thereby impairing neuromuscular transmission. The chain is Short neurotoxin 1 from Acanthophis antarcticus (Common death adder).